The chain runs to 1343 residues: DNA-directed RNA polymerase subunit beta (1343 aa).

This sequence belongs to the RNA polymerase beta chain family. In terms of assembly, the RNAP catalytic core consists of 2 alpha, 1 beta, 1 beta' and 1 omega subunit. When a sigma factor is associated with the core the holoenzyme is formed, which can initiate transcription.

The enzyme catalyses RNA(n) + a ribonucleoside 5'-triphosphate = RNA(n+1) + diphosphate. DNA-dependent RNA polymerase catalyzes the transcription of DNA into RNA using the four ribonucleoside triphosphates as substrates. The protein is DNA-directed RNA polymerase subunit beta of Haemophilus influenzae (strain PittEE).